We begin with the raw amino-acid sequence, 147 residues long: Large ribosomal subunit protein uL15 (147 aa).

The tract at residues 1-65 is disordered; that stretch reads MQLHELKPAP…PLQRRLPKRG (65 aa). Gly residues-rich tracts occupy residues 21-31 and 42-52; these read QGIGSGLGKTA and SGGGVRPGFEG.

It belongs to the universal ribosomal protein uL15 family. Part of the 50S ribosomal subunit.

Binds to the 23S rRNA. The polypeptide is Large ribosomal subunit protein uL15 (Heliobacterium modesticaldum (strain ATCC 51547 / Ice1)).